The following is a 395-amino-acid chain: S-adenosylmethionine synthase 5 (395 aa).

Position 10 (E10) interacts with Mg(2+). H16 contributes to the ATP binding site. Position 44 (E44) interacts with K(+). The L-methionine site is built by E57 and Q100. Residues 168–170 (DGK), 236–239 (SGRF), D247, 253–254 (RK), A270, K274, and K278 contribute to the ATP site. Position 247 (D247) interacts with L-methionine. Position 278 (K278) interacts with L-methionine.

It belongs to the AdoMet synthase family. As to quaternary structure, homotetramer. Requires Mn(2+) as cofactor. Mg(2+) is required as a cofactor. It depends on Co(2+) as a cofactor. The cofactor is K(+).

Its subcellular location is the cytoplasm. It catalyses the reaction L-methionine + ATP + H2O = S-adenosyl-L-methionine + phosphate + diphosphate. It participates in amino-acid biosynthesis; S-adenosyl-L-methionine biosynthesis; S-adenosyl-L-methionine from L-methionine: step 1/1. Functionally, catalyzes the formation of S-adenosylmethionine from methionine and ATP. The reaction comprises two steps that are both catalyzed by the same enzyme: formation of S-adenosylmethionine (AdoMet) and triphosphate, and subsequent hydrolysis of the triphosphate. In Populus trichocarpa (Western balsam poplar), this protein is S-adenosylmethionine synthase 5 (METK5).